Reading from the N-terminus, the 354-residue chain is MSEVNLKGRKVTVHDMCLRDGMHAKREQMSIEQMVTIATALDEAGVPYIQVTHGAGLGGNSLQHGFAPHSNEAYLAAVCGAVKQTKVSVLLLPGLGTMRELQSAYDCGARSVHVATHCTEADTSPQHIAFARKLGMDSTGFLMMAHLNTPEGLAQQGKLMESYGAQTVYITDSAGYMLPGDVKARVSALRDVLKPETEIGFHGHHNMGMGIANSIAAIEAGASRIDASVGGLGAGAGNTPLEAFVAVCERMGIETGCDLFKLMDMAEDIIFPIMDHIVRVDRSSLTLGFAGVYSTFLLHTNRVSQRFGIPARDILVELGRKKMIGGQEDMIIDTAMTMAKERGLLKDATAGVAP.

The region spanning 11–263 is the Pyruvate carboxyltransferase domain; the sequence is VTVHDMCLRD…ETGCDLFKLM (253 aa). 19 to 20 is a binding site for substrate; the sequence is RD. Mn(2+) is bound at residue Asp20. His23 (proton acceptor) is an active-site residue. 2 residues coordinate substrate: Ser173 and His202. 2 residues coordinate Mn(2+): His202 and His204. Tyr293 lines the substrate pocket.

Belongs to the 4-hydroxy-2-oxovalerate aldolase family.

The enzyme catalyses (S)-4-hydroxy-2-oxopentanoate = acetaldehyde + pyruvate. The sequence is that of 4-hydroxy-2-oxovalerate aldolase 5 from Dechloromonas aromatica (strain RCB).